Consider the following 512-residue polypeptide: Pentatricopeptide repeat-containing protein At1g64583, mitochondrial (512 aa).

The N-terminal 34 residues, 1–34, are a transit peptide targeting the mitochondrion; sequence MRRLIVTGIATSTAKGFRRVVNPNLLGGGAAARA. PPR repeat units lie at residues 70–104, 105–139, 140–174, 175–209, 210–244, 245–279, 280–314, 315–349, 350–384, 385–415, 420–454, and 455–489; these read SIVDFTRLLTATANLRRYETVIYFSQKMELYGISH, DLYSFTILIHCFCRCSRLSFALSVLGKMMKLGYEP, SIVTFGSLLHGFCLVNRIGDAFSLVILMVKSGYEP, NVVVYNTLIDGLCKNGELNIALELLNEMEKKGLGA, DVVTYNTLLTGLCYSGRWSDAARMLRDMMKRSINP, DVVTFTALIDVFVKQGNLDEAQELYKEMIQSSVDP, NNVTYNSIINGLCMHGRLYDAKKTFDLMASKGCFP, NVVTYNTLISGFCKFRMVDEGMKLFQRMSCEGFNA, DIFTYNTLIHGYCQVGKLRVALDIFCWMVSRRVTP, DIITHCILLHGLCVNGEIESALVKFDDMRES, GIVAYNIMIHGLCKADKVEKAWELFCRLPVEGVKP, and DARTYTIMILGLCKNGPRREADELIRRMKEEGIIC.

It belongs to the PPR family. P subfamily.

The protein resides in the mitochondrion. This chain is Pentatricopeptide repeat-containing protein At1g64583, mitochondrial, found in Arabidopsis thaliana (Mouse-ear cress).